Here is a 314-residue protein sequence, read N- to C-terminus: Homoserine O-succinyltransferase (314 aa).

Cys142 (acyl-thioester intermediate) is an active-site residue. 2 residues coordinate substrate: Lys163 and Ser192. His235 functions as the Proton acceptor in the catalytic mechanism. Glu237 is an active-site residue. Residue Arg249 participates in substrate binding.

This sequence belongs to the MetA family.

It is found in the cytoplasm. The enzyme catalyses L-homoserine + succinyl-CoA = O-succinyl-L-homoserine + CoA. The protein operates within amino-acid biosynthesis; L-methionine biosynthesis via de novo pathway; O-succinyl-L-homoserine from L-homoserine: step 1/1. Transfers a succinyl group from succinyl-CoA to L-homoserine, forming succinyl-L-homoserine. This chain is Homoserine O-succinyltransferase, found in Photobacterium profundum (strain SS9).